The sequence spans 256 residues: Imidazole glycerol phosphate synthase subunit HisF (256 aa).

Catalysis depends on residues aspartate 11 and aspartate 130.

The protein belongs to the HisA/HisF family. As to quaternary structure, heterodimer of HisH and HisF.

It is found in the cytoplasm. It catalyses the reaction 5-[(5-phospho-1-deoxy-D-ribulos-1-ylimino)methylamino]-1-(5-phospho-beta-D-ribosyl)imidazole-4-carboxamide + L-glutamine = D-erythro-1-(imidazol-4-yl)glycerol 3-phosphate + 5-amino-1-(5-phospho-beta-D-ribosyl)imidazole-4-carboxamide + L-glutamate + H(+). The protein operates within amino-acid biosynthesis; L-histidine biosynthesis; L-histidine from 5-phospho-alpha-D-ribose 1-diphosphate: step 5/9. Functionally, IGPS catalyzes the conversion of PRFAR and glutamine to IGP, AICAR and glutamate. The HisF subunit catalyzes the cyclization activity that produces IGP and AICAR from PRFAR using the ammonia provided by the HisH subunit. The protein is Imidazole glycerol phosphate synthase subunit HisF of Cupriavidus metallidurans (strain ATCC 43123 / DSM 2839 / NBRC 102507 / CH34) (Ralstonia metallidurans).